Reading from the N-terminus, the 200-residue chain is Probable nicotinate-nucleotide adenylyltransferase (200 aa).

It belongs to the NadD family.

It catalyses the reaction nicotinate beta-D-ribonucleotide + ATP + H(+) = deamido-NAD(+) + diphosphate. The protein operates within cofactor biosynthesis; NAD(+) biosynthesis; deamido-NAD(+) from nicotinate D-ribonucleotide: step 1/1. Its function is as follows. Catalyzes the reversible adenylation of nicotinate mononucleotide (NaMN) to nicotinic acid adenine dinucleotide (NaAD). This chain is Probable nicotinate-nucleotide adenylyltransferase, found in Clavibacter michiganensis subsp. michiganensis (strain NCPPB 382).